A 240-amino-acid chain; its full sequence is Peptidyl-tRNA hydrolase (240 aa).

A tRNA-binding site is contributed by tyrosine 14. Residue histidine 19 is the Proton acceptor of the active site. Residues tyrosine 64, asparagine 66, and asparagine 112 each coordinate tRNA. The segment covering 190-204 has biased composition (basic and acidic residues); the sequence is KADEEKPRKDSEKKP. The segment at 190–240 is disordered; it reads KADEEKPRKDSEKKPAGQSHIRQARNNNQPKLPATGPMADMLKKMFGNKGE. A compositionally biased stretch (polar residues) spans 209–219; it reads HIRQARNNNQP.

Belongs to the PTH family. As to quaternary structure, monomer.

The protein localises to the cytoplasm. It carries out the reaction an N-acyl-L-alpha-aminoacyl-tRNA + H2O = an N-acyl-L-amino acid + a tRNA + H(+). In terms of biological role, hydrolyzes ribosome-free peptidyl-tRNAs (with 1 or more amino acids incorporated), which drop off the ribosome during protein synthesis, or as a result of ribosome stalling. Functionally, catalyzes the release of premature peptidyl moieties from peptidyl-tRNA molecules trapped in stalled 50S ribosomal subunits, and thus maintains levels of free tRNAs and 50S ribosomes. This Rhizobium etli (strain ATCC 51251 / DSM 11541 / JCM 21823 / NBRC 15573 / CFN 42) protein is Peptidyl-tRNA hydrolase.